Consider the following 166-residue polypeptide: Thiol peroxidase (166 aa).

The Thioredoxin domain occupies Val-18–Ala-164. Residue Cys-60 is the Cysteine sulfenic acid (-SOH) intermediate of the active site. Cys-60 and Cys-94 are disulfide-bonded.

The protein belongs to the peroxiredoxin family. Tpx subfamily. In terms of assembly, homodimer.

It catalyses the reaction a hydroperoxide + [thioredoxin]-dithiol = an alcohol + [thioredoxin]-disulfide + H2O. Its function is as follows. Thiol-specific peroxidase that catalyzes the reduction of hydrogen peroxide and organic hydroperoxides to water and alcohols, respectively. Plays a role in cell protection against oxidative stress by detoxifying peroxides. The sequence is that of Thiol peroxidase from Halalkalibacterium halodurans (strain ATCC BAA-125 / DSM 18197 / FERM 7344 / JCM 9153 / C-125) (Bacillus halodurans).